The primary structure comprises 1107 residues: Phospholipid-transporting ATPase 2 (1107 aa).

Residues 1 to 33 are Cytoplasmic-facing; sequence MKRFVYINDDEASKELCCDNRISNRKYTLWNFL. Residues 34-55 traverse the membrane as a helical segment; it reads PKNLWEQFSRFMNQYFLLIACL. Over 56–60 the chain is Extracellular; that stretch reads QLWSL. The helical transmembrane segment at 61–83 threads the bilayer; sequence ITPVNPASTWGPLIFIFAVSASK. At 84-268 the chain is on the cytoplasmic side; sequence EAWDDYHRYL…TAMDAMIDKL (185 aa). Residues 269-290 form a helical membrane-spanning segment; sequence TGAIFVFQIVVVLVLGIAGNVW. Topologically, residues 291-315 are extracellular; it reads KDTEARKQWYVQYPEEAPWYELLVI. A helical transmembrane segment spans residues 316 to 333; sequence PLRFELLCSIMIPISIKV. The Cytoplasmic segment spans residues 334–807; it reads SLDLVKGLYA…HGRYSYNRTA (474 aa). The active-site 4-aspartylphosphate intermediate is the Asp-381. Residues Asp-752 and Asp-756 each coordinate Mg(2+). A helical transmembrane segment spans residues 808–827; that stretch reads FLSQYSFYKSLLICFIQIFF. The Extracellular portion of the chain corresponds to 828–841; the sequence is SFISGVSGTSLFNS. Residues 842-860 form a helical membrane-spanning segment; sequence VSLMAYNVFYTSVPVLVSV. The Cytoplasmic segment spans residues 861-890; the sequence is IDKDLSEASVMQHPQILFYCQAGRLLNPST. A helical transmembrane segment spans residues 891 to 912; it reads FAGWFGRSLFHAIIVFVITIHA. The Extracellular segment spans residues 913-919; it reads YAYEKSE. The chain crosses the membrane as a helical span at residues 920-942; it reads MEELGMVALSGCIWLQAFVVAQE. Residues 943–948 lie on the Cytoplasmic side of the membrane; the sequence is TNSFTV. Residues 949–969 form a helical membrane-spanning segment; the sequence is LQHLSIWGNLVGFYAINFLFS. The Extracellular segment spans residues 970–982; sequence AIPSSGMYTIMFR. Residues 983-1007 form a helical membrane-spanning segment; it reads LCSQPSYWITMFLIVGAGMGPIFAL. The Cytoplasmic portion of the chain corresponds to 1008–1107; sequence KYFRYTYRPS…SGYTRNCKDN (100 aa). Residues 1048–1075 form a disordered region; the sequence is DLSPISITQPKNRSPVYEPLLSDSPNAT. Ser-1050 carries the post-translational modification Phosphoserine.

Belongs to the cation transport ATPase (P-type) (TC 3.A.3) family. Type IV subfamily. As to quaternary structure, interacts with ALIS1, ALIS3 and ALIS5 in a heterologous system.

It is found in the endoplasmic reticulum membrane. The protein resides in the prevacuolar compartment membrane. The catalysed reaction is ATP + H2O + phospholipidSide 1 = ADP + phosphate + phospholipidSide 2.. Its function is as follows. Involved in transport of phospholipids. Contributes to transmembrane flipping of lipids. Requires an interaction with a protein of the ALIS family for activity. Specific for phosphatidylserine and has no activity with lysolipid, phosphatidylcholine or phosphatidylethanolamine. The protein is Phospholipid-transporting ATPase 2 of Arabidopsis thaliana (Mouse-ear cress).